Reading from the N-terminus, the 1252-residue chain is ABC transporter B family member 19 (1252 aa).

Asn5 carries an N-linked (GlcNAc...) asparagine glycan. The ABC transmembrane type-1 1 domain occupies 41-330 (MFVGSLGAIV…SFSNLGAFSK (290 aa)). The next 2 helical transmembrane spans lie at 42–62 (FVGSLGAIVHGSSMPVFFLLF) and 88–108 (LYFVYLGLVVCFSSYAEIACW). Asp136 lines the ATP pocket. A run of 4 helical transmembrane segments spans residues 163-183 (VGNFIHYLSTFLAGLVVGFVS), 187-207 (LALLSVAVIPGIAFAGGLYAY), 274-294 (CTYGIACMSWALVFWYAGVFI), and 308-328 (IFSAIVGGMSLGQSFSNLGAF). Brassinolide is bound by residues Tyr276 and Trp283. The 237-residue stretch at 365–601 (IEFKDVTFSY…SGAYASLIRF (237 aa)) folds into the ABC transporter 1 domain. Positions 374, 376, 405, 406, 407, 408, and 529 each coordinate ATP. N-linked (GlcNAc...) asparagine glycosylation is present at Asn641. In terms of domain architecture, ABC transmembrane type-1 2 spans 687 to 975 (SIMGAVGSIL…TVSLAPEIIR (289 aa)). A run of 2 helical transmembrane segments spans residues 688-708 (IMGAVGSILSGFIGPTFAIVM) and 732-752 (FIYIGAGLYAVGAYLIQHYFF). Residue Asn758 is glycosylated (N-linked (GlcNAc...) asparagine). Asp780 is an ATP binding site. N-linked (GlcNAc...) asparagine glycans are attached at residues Asn785 and Asn814. A run of 3 helical transmembrane segments spans residues 822–842 (FIVAFIVEWRVSLLILGTFPL), 914–934 (GFLFGLSQLALYGSEALILWY), and 949–969 (VIKVFVVLVITANSVAETVSL). The interaction with FKBP42/TWD1 stretch occupies residues 965 to 1252 (ETVSLAPEII…RLLQLQTHRI (288 aa)). The ABC transporter 2 domain occupies 1010 to 1246 (IEFRHVDFAY…PEGAYSRLLQ (237 aa)). 6 residues coordinate ATP: Tyr1019, Ser1021, Arg1022, Lys1051, Ser1052, and Ser1053.

The protein belongs to the ABC transporter superfamily. ABCB family. Multidrug resistance exporter (TC 3.A.1.201) subfamily. As to quaternary structure, interacts with 1-naphthylphthalamic acid (NPA), and FKBP42/TWD1. Post-translationally, phosphorylated by PHOT1 in phototropic seedlings, to modulates auxin export and distribution and regulates leaf and petiole curling. As to expression, ubiquitous, mostly in shoot meristems. Present in the majority of stem cells, predominantly in a non-polar manner. Accumulates in seedlings roots and hypocotyls, and in roots apices and inflorescences.

It is found in the cell membrane. The catalysed reaction is (indol-3-yl)acetate(in) + ATP + H2O = (indol-3-yl)acetate(out) + ADP + phosphate + H(+). It carries out the reaction brassinolide(in) + ATP + H2O = brassinolide(out) + ADP + phosphate + H(+). It catalyses the reaction 24-epi-brassinolide(in) + ATP + H2O = 24-epi-brassinolide(out) + ADP + phosphate + H(+). The enzyme catalyses 24-epi-castasterone(in) + ATP + H2O = 24-epi-castasterone(out) + ADP + phosphate + H(+). The catalysed reaction is castasterone(in) + ATP + H2O = castasterone(out) + ADP + phosphate + H(+). With respect to regulation, transport capacity is stimulated by the chaperone protein FKBP42/TWD1. ATPase activity is specifically activated by bioactive brassinosteroids in a dose-dependent manner, including brassinolide (BL), 24-epiBL and 24-epicastasterone (24-epiCS). Inhibited by vanadate. Functionally, brassinosteroid exporter that, in conjunction with ABCB1, supports the accumulation of exogenous brassinosteroids (BR) in the apoplast, thus promoting BR signaling initiation involving the specific receptor BRI1 and required for plant growth and stress responses. Mediates the transport of castasterone (CSA) and brassinolide (BL) across the plasma membrane. Auxin efflux transporter that acts as a negative regulator of light signaling to promote hypocotyl elongation by mediating leaf tip to petiole auxin flux. Required for the regulation of leaf position and morphology during PHOT1-mediated blue light responses involving auxin distribution, especially in low light fluence. Together with ABCB1 and in a FKBP42/TWD1-dependent manner, supports seed development by promoting stamen elongation and, to a lesser extent, anther dehiscence and pollen maturation, probably as auxin transporters. Contributes to the connective auxin transport (CAT) that ensures communication across the shoot system, including auxin loading at axillary bud apices to influence strigolactone-mediated bud outgrowth responses and shoot branching control. Mediates the accumulation of chlorophyll and anthocyanin, as well as the expression of genes in response to light. Participates in auxin efflux and thus regulates the polar auxin basipetal transport (from auxin-producing leaves to auxin-sensitive tissues, and from root tips to root elongating zone). Involved in diverse auxin-mediated responses including gravitropism, phototropism and lateral root formation. Required for the regulation of organ bending, such as gravitropic root bending. In Arabidopsis thaliana (Mouse-ear cress), this protein is ABC transporter B family member 19.